The following is a 344-amino-acid chain: Dihydroorotate dehydrogenase (quinone) (344 aa).

FMN-binding positions include 62-66 (AGLDK) and T86. K66 serves as a coordination point for substrate. 111–115 (NRMGF) is a substrate binding site. 2 residues coordinate FMN: N139 and N172. N172 is a binding site for substrate. The Nucleophile role is filled by S175. N177 lines the substrate pocket. K217 and T245 together coordinate FMN. A substrate-binding site is contributed by 246-247 (NT). FMN contacts are provided by residues G268, G297, and 318–319 (YS).

It belongs to the dihydroorotate dehydrogenase family. Type 2 subfamily. As to quaternary structure, monomer. FMN serves as cofactor.

It is found in the cell membrane. The enzyme catalyses (S)-dihydroorotate + a quinone = orotate + a quinol. It participates in pyrimidine metabolism; UMP biosynthesis via de novo pathway; orotate from (S)-dihydroorotate (quinone route): step 1/1. In terms of biological role, catalyzes the conversion of dihydroorotate to orotate with quinone as electron acceptor. This Chromobacterium violaceum (strain ATCC 12472 / DSM 30191 / JCM 1249 / CCUG 213 / NBRC 12614 / NCIMB 9131 / NCTC 9757 / MK) protein is Dihydroorotate dehydrogenase (quinone).